Consider the following 460-residue polypeptide: tRNA modification GTPase MnmE (460 aa).

Arg-29, Glu-91, and Arg-131 together coordinate (6S)-5-formyl-5,6,7,8-tetrahydrofolate. One can recognise a TrmE-type G domain in the interval 226–383; that stretch reads GLRVALVGRP…LVQAVLERCG (158 aa). K(+) is bound at residue Asn-236. Residues 236 to 241, 255 to 261, and 280 to 283 contribute to the GTP site; these read NVGKSS, TDLPGTT, and DTAG. Ser-240 contacts Mg(2+). The K(+) site is built by Thr-255, Leu-257, and Thr-260. A Mg(2+)-binding site is contributed by Thr-261. Lys-460 is a binding site for (6S)-5-formyl-5,6,7,8-tetrahydrofolate.

Belongs to the TRAFAC class TrmE-Era-EngA-EngB-Septin-like GTPase superfamily. TrmE GTPase family. As to quaternary structure, homodimer. Heterotetramer of two MnmE and two MnmG subunits. K(+) is required as a cofactor.

It localises to the cytoplasm. Functionally, exhibits a very high intrinsic GTPase hydrolysis rate. Involved in the addition of a carboxymethylaminomethyl (cmnm) group at the wobble position (U34) of certain tRNAs, forming tRNA-cmnm(5)s(2)U34. This is tRNA modification GTPase MnmE from Synechococcus sp. (strain WH7803).